The chain runs to 321 residues: Protein ATP1B4 (321 aa).

Residues 1–41 are disordered; sequence MEPGMEMNTASEGGTRRGPENKHEEKVQDPNRGEAETKAEM. The Cytoplasmic portion of the chain corresponds to 1–72; sequence MEPGMEMNTA…RTCMGRTAKS (72 aa). Residues 14–41 show a composition bias toward basic and acidic residues; sequence GTRRGPENKHEEKVQDPNRGEAETKAEM. The chain crosses the membrane as a helical span at residues 73-93; sequence WGLILLFYFIFYTCLAGMFAF. Over 94-321 the chain is Extracellular; that stretch reads CMYVMLLTLS…RIIFTLSIGK (228 aa). Asn-132, Asn-176, and Asn-193 each carry an N-linked (GlcNAc...) asparagine glycan. The cysteines at positions 165 and 184 are disulfide-linked. 2 disulfides stabilise this stretch: Cys-194-Cys-210 and Cys-233-Cys-293. Asn-239, Asn-252, and Asn-270 each carry an N-linked (GlcNAc...) asparagine glycan.

Belongs to the X(+)/potassium ATPases subunit beta family. As to quaternary structure, composed of two subunits: alpha (catalytic) and beta (accessory). In terms of processing, glycosylated. Expressed in skeletal muscle, intestine, heart, brain, retina, inner ear and skin.

The protein localises to the membrane. In terms of biological role, this is the non-catalytic component of the active enzyme, which catalyzes the hydrolysis of ATP coupled with the exchange of Na(+) and K(+) ions across the plasma membrane. This chain is Protein ATP1B4 (ATP1B4), found in Gallus gallus (Chicken).